Here is a 240-residue protein sequence, read N- to C-terminus: 2,3,4,5-tetrahydropyridine-2,6-dicarboxylate N-acetyltransferase (240 aa).

The protein belongs to the transferase hexapeptide repeat family. DapH subfamily.

The enzyme catalyses (S)-2,3,4,5-tetrahydrodipicolinate + acetyl-CoA + H2O = L-2-acetamido-6-oxoheptanedioate + CoA. It participates in amino-acid biosynthesis; L-lysine biosynthesis via DAP pathway; LL-2,6-diaminopimelate from (S)-tetrahydrodipicolinate (acetylase route): step 1/3. Catalyzes the transfer of an acetyl group from acetyl-CoA to tetrahydrodipicolinate. This Bacillus cereus (strain AH187) protein is 2,3,4,5-tetrahydropyridine-2,6-dicarboxylate N-acetyltransferase.